The sequence spans 379 residues: Leukocyte elastase inhibitor (379 aa).

An N-acetylmethionine modification is found at M1. K137 and K177 each carry N6-acetyllysine. S300 carries the phosphoserine modification. Residues 351–379 (NFTADHPFLFFIRHNSSGSILFLGRFSSP) are CARD-binding motif (CBM).

Belongs to the serpin family. Ov-serpin subfamily. As to quaternary structure, monomer. Interacts (via C-terminus) with CASP1; CASP4 (via CARD domain) and CASP5; these interactions regulate the activity of inflammatory caspases. Interacts with PRTN3. Interacts with GZMH. In human bone marrow, present in all CD45+ populations. Expression levels are highest in the neutrophil lineage, intermediate in monocytic, and lowest in lymphocytic lineage. Within the neutrophil lineage, expression is highest in promyelocytes.

Its subcellular location is the secreted. It localises to the cytoplasm. The protein resides in the cytolytic granule. The protein localises to the early endosome. Functionally, neutrophil serine protease inhibitor that plays an essential role in the regulation of the innate immune response, inflammation and cellular homeostasis. Acts primarily to protect the cell from proteases released in the cytoplasm during stress or infection. These proteases are important in killing microbes but when released from granules, these potent enzymes also destroy host proteins and contribute to mortality. Regulates the activity of the neutrophil proteases elastase, cathepsin G, proteinase-3, chymase, chymotrypsin, and kallikrein-3. Also acts as a potent intracellular inhibitor of GZMH by directly blocking its proteolytic activity. During inflammation, limits the activity of inflammatory caspases CASP1, CASP4 and CASP5 by suppressing their caspase-recruitment domain (CARD) oligomerization and enzymatic activation. When secreted, promotes the proliferation of beta-cells via its protease inhibitory function. The polypeptide is Leukocyte elastase inhibitor (SERPINB1) (Homo sapiens (Human)).